Consider the following 326-residue polypeptide: UDP-3-O-acylglucosamine N-acyltransferase (326 aa).

H233 functions as the Proton acceptor in the catalytic mechanism.

It belongs to the transferase hexapeptide repeat family. LpxD subfamily. In terms of assembly, homotrimer.

The enzyme catalyses a UDP-3-O-[(3R)-3-hydroxyacyl]-alpha-D-glucosamine + a (3R)-hydroxyacyl-[ACP] = a UDP-2-N,3-O-bis[(3R)-3-hydroxyacyl]-alpha-D-glucosamine + holo-[ACP] + H(+). It functions in the pathway bacterial outer membrane biogenesis; LPS lipid A biosynthesis. Its function is as follows. Catalyzes the N-acylation of UDP-3-O-acylglucosamine using 3-hydroxyacyl-ACP as the acyl donor. Is involved in the biosynthesis of lipid A, a phosphorylated glycolipid that anchors the lipopolysaccharide to the outer membrane of the cell. This chain is UDP-3-O-acylglucosamine N-acyltransferase, found in Aquifex aeolicus (strain VF5).